Reading from the N-terminus, the 326-residue chain is Ornithine carbamoyltransferase (326 aa).

Carbamoyl phosphate contacts are provided by residues 57–60, glutamine 84, arginine 108, and 135–138; these read STRT and HPTQ. Residues asparagine 169, aspartate 233, and 237–238 contribute to the L-ornithine site; that span reads SM. Carbamoyl phosphate is bound at residue 275-276; that stretch reads CL.

It belongs to the aspartate/ornithine carbamoyltransferase superfamily. OTCase family.

The protein localises to the cytoplasm. The catalysed reaction is carbamoyl phosphate + L-ornithine = L-citrulline + phosphate + H(+). It participates in amino-acid biosynthesis; L-arginine biosynthesis; L-arginine from L-ornithine and carbamoyl phosphate: step 1/3. Reversibly catalyzes the transfer of the carbamoyl group from carbamoyl phosphate (CP) to the N(epsilon) atom of ornithine (ORN) to produce L-citrulline. The protein is Ornithine carbamoyltransferase of Escherichia coli O6:K15:H31 (strain 536 / UPEC).